Here is a 564-residue protein sequence, read N- to C-terminus: Keratin, type II cytoskeletal 6C (564 aa).

The segment covering 1–11 (MASTSTTIRSH) has biased composition (low complexity). The segment at 1 to 23 (MASTSTTIRSHSSSRRGFSANSA) is disordered. N-acetylalanine is present on Ala-2. Residues 2 to 162 (ASTSTTIRSH…DPAIQRVRAE (161 aa)) are head. Ser-60 bears the Phosphoserine mark. The interval 163 to 198 (EREQIKTLNNKFASFIDKVRFLEQQNKVLDTKWTLL) is coil 1A. Positions 163–476 (EREQIKTLNN…KLLEGEECRL (314 aa)) constitute an IF rod domain. The interval 199 to 217 (QEQGTKTVRQNLEPLFEQY) is linker 1. Positions 218–309 (INNLRRQLDS…ALYDAELSQM (92 aa)) are coil 1B. The interval 310 to 333 (QTHISDTSVVLSMDNNRNLDLDSI) is linker 12. The segment at 334 to 472 (IAEVKAQYEE…ATYRKLLEGE (139 aa)) is coil 2. The tail stretch occupies residues 473–564 (ECRLNGEGVG…SSSSRKSYKH (92 aa)).

Belongs to the intermediate filament family. In terms of assembly, heterodimer of a type I and a type II keratin. KRT6 isomers associate with KRT16 and/or KRT17. Constitutively expressed in distinct types of epithelia such as those in oral mucosa, esophagus, papillae of tongue and hair follicle outer root sheath.

In Homo sapiens (Human), this protein is Keratin, type II cytoskeletal 6C (KRT6C).